The chain runs to 302 residues: Alpha-N-acetyl-neuraminyl-2,3-beta-galactosyl-1,3-N-acetyl-galactosaminide alpha-2,6-sialyltransferase (302 aa).

At 1-6 (MKAPGR) the chain is on the cytoplasmic side. Residues 7–27 (LVLIILCSVVFSAVYILLCCW) form a helical; Signal-anchor for type II membrane protein membrane-spanning segment. Over 28-302 (AGLPLCLATC…VFAHPSWRTE (275 aa)) the chain is Lumenal. The cysteines at positions 76 and 225 are disulfide-linked. Asn135 carries an N-linked (GlcNAc...) asparagine glycan.

The protein belongs to the glycosyltransferase 29 family. Ubiquitous.

The protein localises to the golgi apparatus membrane. It catalyses the reaction an alpha-Neu5Ac-(2-&gt;3)-beta-D-Gal-(1-&gt;3)-D-GlcNAc derivative + CMP-N-acetyl-beta-neuraminate = an alpha-Neu5Ac-(2-&gt;3)-beta-D-Gal-(1-&gt;3)-[alpha-Neu5Ac-(2-&gt;6)]-D-GlcNAc derivative + CMP + H(+). It carries out the reaction N-acetyl-alpha-neuraminosyl-(2-&gt;3)-beta-D-galactosyl-(1-&gt;3)-N-acetyl-D-galactosamine + CMP-N-acetyl-beta-neuraminate = N-acetyl-alpha-neuraminosyl-(2-&gt;3)-beta-D-galactosyl-(1-&gt;3)-[N-acetyl-alpha-neuraminosyl-(2-&gt;6)]-N-acetyl-D-galactosamine + CMP + H(+). The catalysed reaction is a ganglioside GM1b (d18:1(4E)) + CMP-N-acetyl-beta-neuraminate = a ganglioside GD1alpha (d18:1(4E)) + CMP + H(+). The enzyme catalyses 3-O-[alpha-Neu5Ac-(2-&gt;3)-beta-D-Gal-(1-&gt;3)-alpha-D-GalNAc]-L-Ser-[protein] + CMP-N-acetyl-beta-neuraminate = a 3-O-{alpha-Neu5Ac-(2-&gt;3)-beta-D-Gal-(1-&gt;3)-[alpha-Neu5Ac-(2-&gt;6)]-alpha-D-GalNAc}-L-seryl-[protein] + CMP + H(+). It catalyses the reaction 3-O-[alpha-Neu5Ac-(2-&gt;3)-beta-D-Gal-(1-&gt;3)-alpha-D-GalNAc]-L-Thr-[protein] + CMP-N-acetyl-beta-neuraminate = a 3-O-{alpha-Neu5Ac-(2-&gt;3)-beta-D-Gal-(1-&gt;3)-[alpha-Neu5Ac-(2-&gt;6)]-alpha-D-GalNAc}-L-threonyl-[protein] + CMP + H(+). The protein operates within protein modification; protein glycosylation. It participates in glycolipid biosynthesis. Its function is as follows. Transfers the sialyl group (N-acetyl-alpha-neuraminyl or NeuAc) from CMP-NeuAc to the GalNAc residue on the NeuAc-alpha-2,3-Gal-beta-1,3-GalNAc sequence of glycoproteins and glycolipids forming an alpha-2,6-linkage. Produces branched type disialyl structures by transfer of a sialyl group onto a GalNAc residue inside the backbone core chains. Prefers O-glycans to glycoproteins or glycolipids. This is Alpha-N-acetyl-neuraminyl-2,3-beta-galactosyl-1,3-N-acetyl-galactosaminide alpha-2,6-sialyltransferase (ST6GALNAC4) from Homo sapiens (Human).